Reading from the N-terminus, the 112-residue chain is UPF0122 protein CPE1714 (112 aa).

This sequence belongs to the UPF0122 family.

Its function is as follows. Might take part in the signal recognition particle (SRP) pathway. This is inferred from the conservation of its genetic proximity to ftsY/ffh. May be a regulatory protein. This Clostridium perfringens (strain 13 / Type A) protein is UPF0122 protein CPE1714.